The primary structure comprises 336 residues: Fructose-1,6-bisphosphatase class 1 (336 aa).

Mg(2+) is bound by residues E90, D112, L114, and D115. Residues 115 to 118 (DGSS), N211, and K277 each bind substrate. E283 is a binding site for Mg(2+).

It belongs to the FBPase class 1 family. As to quaternary structure, homotetramer. Requires Mg(2+) as cofactor.

The protein localises to the cytoplasm. The catalysed reaction is beta-D-fructose 1,6-bisphosphate + H2O = beta-D-fructose 6-phosphate + phosphate. The protein operates within carbohydrate biosynthesis; gluconeogenesis. The chain is Fructose-1,6-bisphosphatase class 1 from Pseudomonas paraeruginosa (strain DSM 24068 / PA7) (Pseudomonas aeruginosa (strain PA7)).